Here is a 405-residue protein sequence, read N- to C-terminus: Probable tRNA sulfurtransferase (405 aa).

A THUMP domain is found at 60–165; it reads EGVIERLRHV…QDAIYLTNQV (106 aa). ATP contacts are provided by residues 183-184, 208-209, Arg-265, Gly-287, and Gln-296; these read ML and HF.

The protein belongs to the ThiI family.

It is found in the cytoplasm. It catalyses the reaction [ThiI sulfur-carrier protein]-S-sulfanyl-L-cysteine + a uridine in tRNA + 2 reduced [2Fe-2S]-[ferredoxin] + ATP + H(+) = [ThiI sulfur-carrier protein]-L-cysteine + a 4-thiouridine in tRNA + 2 oxidized [2Fe-2S]-[ferredoxin] + AMP + diphosphate. The enzyme catalyses [ThiS sulfur-carrier protein]-C-terminal Gly-Gly-AMP + S-sulfanyl-L-cysteinyl-[cysteine desulfurase] + AH2 = [ThiS sulfur-carrier protein]-C-terminal-Gly-aminoethanethioate + L-cysteinyl-[cysteine desulfurase] + A + AMP + 2 H(+). The protein operates within cofactor biosynthesis; thiamine diphosphate biosynthesis. Functionally, catalyzes the ATP-dependent transfer of a sulfur to tRNA to produce 4-thiouridine in position 8 of tRNAs, which functions as a near-UV photosensor. Also catalyzes the transfer of sulfur to the sulfur carrier protein ThiS, forming ThiS-thiocarboxylate. This is a step in the synthesis of thiazole, in the thiamine biosynthesis pathway. The sulfur is donated as persulfide by IscS. The chain is Probable tRNA sulfurtransferase from Latilactobacillus sakei subsp. sakei (strain 23K) (Lactobacillus sakei subsp. sakei).